We begin with the raw amino-acid sequence, 565 residues long: Protein priB (565 aa).

A DNA-binding region (zn(2)-C6 fungal-type) is located at residues 20–50 (CTTCRAAKMKCVGAEDGQRQCQRCKRANVQC). Disordered regions lie at residues 82–170 (AKSK…SDRA) and 195–224 (NPED…APAG). The segment covering 90–111 (DARHSSSYRDSHPSLGEPDDRY) has biased composition (basic and acidic residues). Over residues 129–155 (SNLPPLNLPSYPDAASEYTASSTSSRT) the composition is skewed to low complexity. Residues 203-215 (GPSSVRCSETYSP) are compositionally biased toward polar residues.

The protein localises to the nucleus. In Lentinula edodes (Shiitake mushroom), this protein is Protein priB (priB).